The sequence spans 200 residues: Large ribosomal subunit protein uL4 (200 aa).

The segment at 44–71 (AQKTRAEVSGGGKKPWRQKGTGRARAGS) is disordered.

This sequence belongs to the universal ribosomal protein uL4 family. Part of the 50S ribosomal subunit.

Functionally, one of the primary rRNA binding proteins, this protein initially binds near the 5'-end of the 23S rRNA. It is important during the early stages of 50S assembly. It makes multiple contacts with different domains of the 23S rRNA in the assembled 50S subunit and ribosome. In terms of biological role, forms part of the polypeptide exit tunnel. This is Large ribosomal subunit protein uL4 from Psychrobacter sp. (strain PRwf-1).